The chain runs to 1174 residues: Ribonucleoside-diphosphate reductase large subunit-like protein (1174 aa).

The short motif at 50–72 (PYVRIMNGVSGIQIGNHNAMSIA) is the RIP homotypic interaction motif (RHIM) element. Disordered stretches follow at residues 170–269 (ASNA…KLKP) and 291–325 (AAAAVAPESESSPAASAPPAAAAMATGGDDEDQSS). Composition is skewed to low complexity over residues 182 to 202 (ATSGAGSAAATPAATTPAATA), 233 to 243 (HVSVGTQATPS), and 291 to 316 (AAAAVAPESESSPAASAPPAAAAMAT).

Belongs to the ribonucleoside diphosphate reductase large chain family. As to quaternary structure, self-assembles into homo-oligomeric amyloid fibrils. Interacts with host RIPK1 (via RIP homotypic interaction motif); this interaction inhibits RIPK1 ubiquitination thereby preventing effective activation of host NF-kappa-B. Interacts with host RIPK3 (via RIP homotypic interaction motif); this interaction disrupts RIPK3-RIPK1 interactions characteristic of TNF-alpha induced necroptosis, thereby suppressing this death pathway. Interacts (via RIP homotypic interaction motif) with host ZBP1 (via RIP homotypic interaction motif); this interaction inhibits recruitment of RIPK1 and RIPK3 to ZBP1 and prevents ZBP1-induced NF-kappa-B activation. Post-translationally, undergoes proteolytic cleavage, generating two peptides, a N-terminal and a 116 kDa. The N-terminal peptide retains RIPK1- and RIPK3-binding activity as well as cell death suppression activity.

Its subcellular location is the virion. The protein localises to the host cytoplasm. In terms of biological role, provides optimal viral replication conditions by promoting host cell survival and avoiding the host inflammatory response linked to NF-kappa-B activation. Blocks RIPK1 ubiquitination, thereby preventing NF-kappa-B activation and virally induced inflammatory response. Prevents host necroptosis by targeting RIPK3 thereby preventing the formation of necroptotic RIPK1-RIPK3 complexes. Also inhibits ZBP1-induced necroptosis. Does not have ribonucleotide reductase activity. Betaherpesviruses probably use another strategy to expand the dNTP pool in a quiescent host cell. In Murid herpesvirus 1 (strain Smith) (MuHV-1), this protein is Ribonucleoside-diphosphate reductase large subunit-like protein.